We begin with the raw amino-acid sequence, 482 residues long: Chromosome stability protein 9 (482 aa).

2 disordered regions span residues 239–263 (SSLR…VNKN) and 418–482 (SGLA…RRIR). The segment covering 240–249 (SLRNSSKNNN) has biased composition (low complexity). The segment covering 250–263 (GTVTPSTSGRVNKN) has biased composition (polar residues). The span at 418–437 (SGLAFSSSSNSLQQSKLPKS) shows a compositional bias: low complexity. 2 stretches are compositionally biased toward polar residues: residues 440–453 (LKRS…TNTH) and 463–473 (RSSNTVLGSSK).

As to quaternary structure, component of the synapsis initiation complex composed of at least ZIP2, ZIP3, MSH4 and MSH5. Also interacts with ZIP1, MRE11, RAD51 and RAD53.

It is found in the nucleus. It localises to the chromosome. In terms of biological role, component of the synapsis initiation complex (SIC) necessary for the synaptonemal complex assembly. Stabilizes the ZIP2 component to the chromosomes. The SIC complex loads onto chromosomes and nucleates ZIP1 polymerization, a molecular zipper that acts to bring homologous chromosomes in close apposition, which is required for meiotic crossover. May also be involved in double strand break repair. The chain is Chromosome stability protein 9 (CST9) from Saccharomyces cerevisiae (strain ATCC 204508 / S288c) (Baker's yeast).